Reading from the N-terminus, the 637-residue chain is Sodium-dependent phosphate transport protein 2A (637 aa).

The Cytoplasmic portion of the chain corresponds to 1-103 (MMSYSERLGG…LAQVGTKLLK (103 aa)). Phosphoserine occurs at positions 14 and 34. A helical membrane pass occupies residues 104 to 125 (VPLMLGFLYLFVCSLDVLSSAF). Over 126 to 145 (QLAGGKVAGDIFKDNAILSN) the chain is Extracellular. The helical transmembrane segment at 146–163 (PVAGLVVGILVTVLVQSS) threads the bilayer. Topologically, residues 164-216 (STSTSIIVSMVSSGLLEVSSAIPIIMGSNIGTSVTNTIVALMQAGDRTDFRRA) are cytoplasmic. A helical membrane pass occupies residues 217-236 (FAGATVHDCFNWLSVLVLLP). 2 disulfide bridges follow: Cys225/Cys520 and Cys306/Cys334. The Extracellular portion of the chain corresponds to 237-345 (LEAATGYLHH…HIFVDTGLPD (109 aa)). Residues Asn298 and Asn328 are each glycosylated (N-linked (GlcNAc...) asparagine). Residues 346–368 (LAVGLILLAGSLVVLCTCLILLV) traverse the membrane as a helical segment. At 369–410 (KMLNSLLKGQVANVIQKVINTDFPAPFTWVTGYFAMVVGASM) the chain is on the cytoplasmic side. The chain crosses the membrane as a helical span at residues 411-434 (TFVVQSSSVFTSAITPLIGLGVIS). Over 435-464 (IERAYPLTLGSNIGTTTTAILAALASPREK) the chain is Extracellular. Residues 465-485 (LSSSFQIALCHFFFNISGILL) form a helical membrane-spanning segment. Over 486–511 (WYPLPCTRLPIRMAKALGKRTAKYRW) the chain is Cytoplasmic. At Thr506 the chain carries Phosphothreonine; by PKC. Residues 512 to 532 (FAVLYLLVCFLLLPSLVFGIS) traverse the membrane as a helical segment. Over 533-537 (MAGWQ) the chain is Extracellular. Residues 538–559 (AMVGVGTPFGALLAFVVLVNVL) traverse the membrane as a helical segment. At 560–637 (QSRSPGHLPK…LPAHHNATRL (78 aa)) the chain is on the cytoplasmic side. Ser605 bears the Phosphoserine mark. The residue at position 621 (Thr621) is a Phosphothreonine. A Phosphoserine modification is found at Ser623.

It belongs to the SLC34A transporter family. In terms of assembly, interacts via its C-terminal region with NHERF4. Interacts with NHERF1. Interacts with TMEM174; regulates SLC34A1 internalization by PTH and FGF23. As to expression, kidney.

The protein resides in the apical cell membrane. It is found in the cell membrane. The enzyme catalyses 3 Na(+)(out) + phosphate(out) = 3 Na(+)(in) + phosphate(in). Transport activity is significantly increased in response to dietary phosphate deprivation. Its function is as follows. Involved in actively transporting phosphate into cells via Na(+) cotransport in the renal brush border membrane. The cotransport has a Na(+):Pi stoichiometry of 3:1 and is electrogenic. The polypeptide is Sodium-dependent phosphate transport protein 2A (Rattus norvegicus (Rat)).